Here is a 246-residue protein sequence, read N- to C-terminus: Alpha-amylase inhibitor 1 (246 aa).

Positions 1–23 (MIMASSKLLSLALFLALLSHANS) are cleaved as a signal peptide. N-linked (GlcNAc...) asparagine glycans are attached at residues asparagine 35, asparagine 88, and asparagine 163. Positions 240–246 (IVLNKIL) are excised as a propeptide.

It belongs to the leguminous lectin family. As to quaternary structure, heterodimer of chain 1 and chain 2. Post-translationally, proteolytic processing yields active form.

Functionally, lectin and alpha-amylase inhibitor. Acts as a defensive protein against insects. In Phaseolus vulgaris (Kidney bean), this protein is Alpha-amylase inhibitor 1 (LLP).